The chain runs to 432 residues: Glyceraldehyde-3-phosphate dehydrogenase, testis-specific (432 aa).

Residues 1–97 form a testis-specific N-terminal extension region; it reads MSRRDVVLTN…PPPPPPPKPA (97 aa). The disordered stretch occupies residues 40–101; it reads PPPPKVEEPP…PPPKPAKELT (62 aa). Residues 44 to 55 are compositionally biased toward basic and acidic residues; it reads KVEEPPPPKEEP. 2 stretches are compositionally biased toward pro residues: residues 56–67 and 75–95; these read PPPPPPPPPPQI and APPPPPPPPPPPPPPPPPPPK. Residues 109 to 110, Asp130, Lys175, Tyr197, and Thr217 contribute to the NAD(+) site; that span reads RI. D-glyceraldehyde 3-phosphate is bound by residues 247 to 249, Thr278, 307 to 308, and Arg330; these read SCT and TG. The Nucleophile role is filled by Cys248. Residue Ser350 is modified to Phosphoserine. Asn412 provides a ligand contact to NAD(+).

The protein belongs to the glyceraldehyde-3-phosphate dehydrogenase family. Homotetramer. As to expression, expressed in both head and flagellum of epididymal sperm.

It is found in the cytoplasm. It catalyses the reaction D-glyceraldehyde 3-phosphate + phosphate + NAD(+) = (2R)-3-phospho-glyceroyl phosphate + NADH + H(+). Its pathway is carbohydrate degradation; glycolysis; pyruvate from D-glyceraldehyde 3-phosphate: step 1/5. May play an important role in regulating the switch between different pathways for energy production during spermiogenesis and in the spermatozoon. Required for sperm motility and male fertility. In Rattus norvegicus (Rat), this protein is Glyceraldehyde-3-phosphate dehydrogenase, testis-specific (Gapdhs).